The primary structure comprises 291 residues: Phosphatidylglycerol--prolipoprotein diacylglyceryl transferase (291 aa).

7 helical membrane-spanning segments follow: residues 21–41 (VALH…MWLA), 60–80 (LLYA…VLFY), 96–116 (WDGG…MIIF), 130–150 (FIAP…FING), 198–218 (SQLY…NLFI), 225–245 (GAVS…VEFF), and 260–280 (ISMG…MMVW). Arg143 lines the a 1,2-diacyl-sn-glycero-3-phospho-(1'-sn-glycerol) pocket.

Belongs to the Lgt family.

It is found in the cell inner membrane. The enzyme catalyses L-cysteinyl-[prolipoprotein] + a 1,2-diacyl-sn-glycero-3-phospho-(1'-sn-glycerol) = an S-1,2-diacyl-sn-glyceryl-L-cysteinyl-[prolipoprotein] + sn-glycerol 1-phosphate + H(+). It functions in the pathway protein modification; lipoprotein biosynthesis (diacylglyceryl transfer). Functionally, catalyzes the transfer of the diacylglyceryl group from phosphatidylglycerol to the sulfhydryl group of the N-terminal cysteine of a prolipoprotein, the first step in the formation of mature lipoproteins. The protein is Phosphatidylglycerol--prolipoprotein diacylglyceryl transferase of Salmonella newport (strain SL254).